The following is a 488-amino-acid chain: MSLWFCPLTSTLSRQQPIHFIGVGGIGMSALALILVNRGHIVSGSDPRENTTVERLRAQGVRVFRDQSAANINAICSNVDLLPLVVISTAIPKSNPELKAAKLSQLKILHRSDLLAALIQAQPSIAVAGSHGKTTTSTLLTTLLATTDQDPTAVIGGVVPYYDSNGHAGKGRLLVAEADESDGSLVKFQATLGVITNLELDHTDHYADLDELINTMKRFGRGCRRLLANFDCPILKEHFDATAWWSVKTSAGVDFAALPICLNGDQTIADIYEQGKRMGQITLPMPGLHNLSNAMAAIAACRLAGLSFEDLQQGLADLQPPGRRFDFRGTWEGRQIVDDYAHHPSEVSATLAMARLIVTSGRSQLPSPPKRILAVFQPHRYSRTNEFLYEFARALGEADAVLLAPVYSAGENPIQGATSESLANAIRIQHPNLPVAVAENFNQLTLLVQKHSLKGDLVLAMGAGNINNLWRQLTRLDNAKTCPPSLAA.

129–135 contacts ATP; that stretch reads GSHGKTT.

This sequence belongs to the MurCDEF family.

It localises to the cytoplasm. The catalysed reaction is UDP-N-acetyl-alpha-D-muramate + L-alanine + ATP = UDP-N-acetyl-alpha-D-muramoyl-L-alanine + ADP + phosphate + H(+). The protein operates within cell wall biogenesis; peptidoglycan biosynthesis. In terms of biological role, cell wall formation. This is UDP-N-acetylmuramate--L-alanine ligase from Prochlorococcus marinus (strain MIT 9303).